The chain runs to 284 residues: Bifunctional protein FolD (284 aa).

NADP(+) is bound by residues 166–168 (GAS) and Ile232.

It belongs to the tetrahydrofolate dehydrogenase/cyclohydrolase family. In terms of assembly, homodimer.

The catalysed reaction is (6R)-5,10-methylene-5,6,7,8-tetrahydrofolate + NADP(+) = (6R)-5,10-methenyltetrahydrofolate + NADPH. The enzyme catalyses (6R)-5,10-methenyltetrahydrofolate + H2O = (6R)-10-formyltetrahydrofolate + H(+). Its pathway is one-carbon metabolism; tetrahydrofolate interconversion. Its function is as follows. Catalyzes the oxidation of 5,10-methylenetetrahydrofolate to 5,10-methenyltetrahydrofolate and then the hydrolysis of 5,10-methenyltetrahydrofolate to 10-formyltetrahydrofolate. This chain is Bifunctional protein FolD, found in Stutzerimonas stutzeri (strain A1501) (Pseudomonas stutzeri).